The following is a 155-amino-acid chain: Xanthine-guanine phosphoribosyltransferase (155 aa).

5-phospho-alpha-D-ribose 1-diphosphate-binding positions include 37–38 (RG), Arg-69, and 90–98 (EDLVDTGTT). Arg-69 contacts GMP. Asp-91 serves as a coordination point for Mg(2+). Guanine contacts are provided by Asp-94 and Ile-137. Positions 94 and 137 each coordinate xanthine. GMP contacts are provided by residues 94 to 98 (DTGTT) and 136 to 137 (WI).

This sequence belongs to the purine/pyrimidine phosphoribosyltransferase family. XGPT subfamily. In terms of assembly, homotetramer. The cofactor is Mg(2+).

Its subcellular location is the cell inner membrane. It carries out the reaction GMP + diphosphate = guanine + 5-phospho-alpha-D-ribose 1-diphosphate. It catalyses the reaction XMP + diphosphate = xanthine + 5-phospho-alpha-D-ribose 1-diphosphate. The enzyme catalyses IMP + diphosphate = hypoxanthine + 5-phospho-alpha-D-ribose 1-diphosphate. It functions in the pathway purine metabolism; GMP biosynthesis via salvage pathway; GMP from guanine: step 1/1. Its pathway is purine metabolism; XMP biosynthesis via salvage pathway; XMP from xanthine: step 1/1. Functionally, purine salvage pathway enzyme that catalyzes the transfer of the ribosyl-5-phosphate group from 5-phospho-alpha-D-ribose 1-diphosphate (PRPP) to the N9 position of the 6-oxopurines guanine and xanthine to form the corresponding ribonucleotides GMP (guanosine 5'-monophosphate) and XMP (xanthosine 5'-monophosphate), with the release of PPi. To a lesser extent, also acts on hypoxanthine. The protein is Xanthine-guanine phosphoribosyltransferase of Aeromonas hydrophila subsp. hydrophila (strain ATCC 7966 / DSM 30187 / BCRC 13018 / CCUG 14551 / JCM 1027 / KCTC 2358 / NCIMB 9240 / NCTC 8049).